The following is a 226-amino-acid chain: Deoxyribose-phosphate aldolase (226 aa).

The active-site Proton donor/acceptor is Asp93. Lys159 functions as the Schiff-base intermediate with acetaldehyde in the catalytic mechanism. Lys189 acts as the Proton donor/acceptor in catalysis.

It belongs to the DeoC/FbaB aldolase family. DeoC type 1 subfamily.

The protein resides in the cytoplasm. The enzyme catalyses 2-deoxy-D-ribose 5-phosphate = D-glyceraldehyde 3-phosphate + acetaldehyde. It participates in carbohydrate degradation; 2-deoxy-D-ribose 1-phosphate degradation; D-glyceraldehyde 3-phosphate and acetaldehyde from 2-deoxy-alpha-D-ribose 1-phosphate: step 2/2. In terms of biological role, catalyzes a reversible aldol reaction between acetaldehyde and D-glyceraldehyde 3-phosphate to generate 2-deoxy-D-ribose 5-phosphate. The polypeptide is Deoxyribose-phosphate aldolase (Mycobacterium marinum (strain ATCC BAA-535 / M)).